Consider the following 185-residue polypeptide: Large ribosomal subunit protein uL13 (185 aa).

It belongs to the universal ribosomal protein uL13 family. As to quaternary structure, part of the 50S ribosomal subunit.

This protein is one of the early assembly proteins of the 50S ribosomal subunit, although it is not seen to bind rRNA by itself. It is important during the early stages of 50S assembly. The chain is Large ribosomal subunit protein uL13 from Pyrobaculum islandicum (strain DSM 4184 / JCM 9189 / GEO3).